The primary structure comprises 155 residues: Cardioactive peptide (155 aa).

The signal sequence occupies residues 1–23 (MRTSMRISLRLLALLACAICSQA). Residues 24 to 49 (SLERENNEGTNMANHKLSGVIQWKYE) constitute a propeptide that is removed on maturation. A disulfide bridge links C54 with C60. Cysteine amide is present on C60. A propeptide spanning residues 64–155 (RTYPSYPPFS…MQQLEERESK (92 aa)) is cleaved from the precursor. Residues 135-155 (NKQKMLQNEKEMQQLEERESK) are disordered. Residues 141-155 (QNEKEMQQLEERESK) are compositionally biased toward basic and acidic residues.

As to expression, central nervous system; most neurons exhibit coexpression with Burs.

The protein localises to the secreted. In terms of biological role, cardioregulatory neurohormone that increases heart beat rate during adult wing inflation; has no effect on beat amplitude. The effect of CCAP is both ino- and chronotropic. This Drosophila melanogaster (Fruit fly) protein is Cardioactive peptide.